A 253-amino-acid chain; its full sequence is Putative ankyrin repeat protein NMB1133/NMB1171 (253 aa).

ANK repeat units lie at residues 196-225 (DGYTPLHHEAIAGNALMVQAMLEYGANPAS) and 229-252 (EGYTALDFACLTGWQNVADLLEPR).

This Neisseria meningitidis serogroup B (strain ATCC BAA-335 / MC58) protein is Putative ankyrin repeat protein NMB1133/NMB1171.